A 148-amino-acid polypeptide reads, in one-letter code: Cytochrome c-type biogenesis protein CcmE (148 aa).

The Cytoplasmic portion of the chain corresponds to 1–7; the sequence is MTRKQRR. A helical; Signal-anchor for type II membrane protein membrane pass occupies residues 8–28; sequence LYFVLLGMAALGGAVALVLTA. The Periplasmic segment spans residues 29–148; it reads ISDSLVYFYS…QWNDGKQPKQ (120 aa). His121 and Tyr125 together coordinate heme.

The protein belongs to the CcmE/CycJ family.

The protein resides in the cell inner membrane. Functionally, heme chaperone required for the biogenesis of c-type cytochromes. Transiently binds heme delivered by CcmC and transfers the heme to apo-cytochromes in a process facilitated by CcmF and CcmH. In Paramagnetospirillum magneticum (strain ATCC 700264 / AMB-1) (Magnetospirillum magneticum), this protein is Cytochrome c-type biogenesis protein CcmE.